A 111-amino-acid polypeptide reads, in one-letter code: Large ribosomal subunit protein uL22 (111 aa).

The protein belongs to the universal ribosomal protein uL22 family. In terms of assembly, part of the 50S ribosomal subunit.

Its function is as follows. This protein binds specifically to 23S rRNA; its binding is stimulated by other ribosomal proteins, e.g. L4, L17, and L20. It is important during the early stages of 50S assembly. It makes multiple contacts with different domains of the 23S rRNA in the assembled 50S subunit and ribosome. Functionally, the globular domain of the protein is located near the polypeptide exit tunnel on the outside of the subunit, while an extended beta-hairpin is found that lines the wall of the exit tunnel in the center of the 70S ribosome. The chain is Large ribosomal subunit protein uL22 from Clostridium kluyveri (strain NBRC 12016).